Reading from the N-terminus, the 119-residue chain is MFGVGIDIIEIDRIRKSYQTYGDRFLKKIFTEGERVYCFSKSNPYASLAARFAAKEAVAKALGTGIGKLLKWKEIEMCRDSRQPQVVVPEALLCSLGVKRVLLSVSHSREYATAVAIAE.

Mg(2+) contacts are provided by D7 and E56.

The protein belongs to the P-Pant transferase superfamily. AcpS family. Mg(2+) serves as cofactor.

The protein resides in the cytoplasm. The catalysed reaction is apo-[ACP] + CoA = holo-[ACP] + adenosine 3',5'-bisphosphate + H(+). In terms of biological role, transfers the 4'-phosphopantetheine moiety from coenzyme A to a Ser of acyl-carrier-protein. The chain is Holo-[acyl-carrier-protein] synthase from Chlamydia trachomatis serovar D (strain ATCC VR-885 / DSM 19411 / UW-3/Cx).